Here is a 624-residue protein sequence, read N- to C-terminus: Chromosomal replication initiator protein DnaA (624 aa).

Residues 1–99 are domain I, interacts with DnaA modulators; the sequence is MADVPADLAA…SAGEPPSPPA (99 aa). The segment at 88 to 284 is disordered; it reads DDSAGEPPSP…APGPGEPHAR (197 aa). The domain II stretch occupies residues 100-283; sequence PPMHQSHQSQ…PAPGPGEPHA (184 aa). Low complexity predominate over residues 102–112; it reads MHQSHQSQQGH. Composition is skewed to basic and acidic residues over residues 118-141 and 176-206; these read QRDDAPRGDAYDGYGHRPSDDGMP and GYQDREQPSGEPYRESESYRERENEQYREQA. Positions 250–264 are enriched in gly residues; it reads PRQGGHGPGRTGGSV. The domain III, AAA+ region stretch occupies residues 284 to 500; the sequence is RLNPKYLFDT…GALIRVTAFA (217 aa). 4 residues coordinate ATP: G328, G330, K331, and T332. Positions 501-624 are domain IV, binds dsDNA; that stretch reads SLNRQPVDLG…TELTNRIKNG (124 aa).

This sequence belongs to the DnaA family. As to quaternary structure, oligomerizes as a right-handed, spiral filament on DNA at oriC.

Its subcellular location is the cytoplasm. In terms of biological role, plays an essential role in the initiation and regulation of chromosomal replication. ATP-DnaA binds to the origin of replication (oriC) to initiate formation of the DNA replication initiation complex once per cell cycle. Binds the DnaA box (a 9 base pair repeat at the origin) and separates the double-stranded (ds)DNA. Forms a right-handed helical filament on oriC DNA; dsDNA binds to the exterior of the filament while single-stranded (ss)DNA is stabiized in the filament's interior. The ATP-DnaA-oriC complex binds and stabilizes one strand of the AT-rich DNA unwinding element (DUE), permitting loading of DNA polymerase. After initiation quickly degrades to an ADP-DnaA complex that is not apt for DNA replication. Binds acidic phospholipids. The DnaA box consensus is 5'-(T/C)(T/C)(G/AC)TCCACA-3'. This is Chromosomal replication initiator protein DnaA from Streptomyces anulatus (Streptomyces chrysomallus).